The primary structure comprises 179 residues: Lebocin-1/2 (179 aa).

Positions 1-16 (MYKFLVFSSVLVLFFA) are cleaved as a signal peptide. Residues 17–120 (QASCQRFIQP…QPIESHRNTR (104 aa)) constitute a propeptide that is removed on maturation. The interval 93 to 116 (NNEASIEHSHHTVDTGLDQPIESH) is disordered. O-linked (GalNAc...) threonine glycosylation occurs at Thr135. A propeptide spanning residues 153-179 (RRHASDDQEELRQYNEHFLIPRDIFQE) is cleaved from the precursor.

Belongs to the lebocin family. In terms of processing, O-glycosylation is important for the antibacterial activity of lebocin, O-linked glycan structure is a disaccharide (Gal-GalNAc) in case of lebocin 1 and a monosaccharide (GalNAc) in case of lebocin 2. As to expression, hemolymph. Produced in fat body.

It localises to the secreted. Antibacterial peptide. The protein is Lebocin-1/2 of Bombyx mori (Silk moth).